Reading from the N-terminus, the 211-residue chain is Large ribosomal subunit protein uL4 (211 aa).

Polar residues predominate over residues 41–53 (QAHSRQGTASTLT). Residues 41–78 (QAHSRQGTASTLTRAEVRGGGRKPYKQKGTGRARQGTI) are disordered. The span at 60 to 71 (GGRKPYKQKGTG) shows a compositional bias: basic residues.

This sequence belongs to the universal ribosomal protein uL4 family. In terms of assembly, part of the 50S ribosomal subunit.

In terms of biological role, one of the primary rRNA binding proteins, this protein initially binds near the 5'-end of the 23S rRNA. It is important during the early stages of 50S assembly. It makes multiple contacts with different domains of the 23S rRNA in the assembled 50S subunit and ribosome. Functionally, forms part of the polypeptide exit tunnel. This chain is Large ribosomal subunit protein uL4, found in Prochlorococcus marinus (strain MIT 9313).